The chain runs to 295 residues: Probable protein phosphatase 2C 5 (295 aa).

Residues 23 to 294 enclose the PPM-type phosphatase domain; that stretch reads QYAATHMQGW…DNMTCILVLF (272 aa). Positions 57 and 58 each coordinate Mn(2+). Residues 151–170 form a disordered region; that stretch reads NRDGKPFDMSKDHKPDDDQE. Mn(2+) contacts are provided by D237 and D285.

Belongs to the PP2C family. Mg(2+) is required as a cofactor. The cofactor is Mn(2+).

Its subcellular location is the membrane. It carries out the reaction O-phospho-L-seryl-[protein] + H2O = L-seryl-[protein] + phosphate. The enzyme catalyses O-phospho-L-threonyl-[protein] + H2O = L-threonyl-[protein] + phosphate. Its function is as follows. Enzyme with a broad specificity. The polypeptide is Probable protein phosphatase 2C 5 (Paramecium tetraurelia).